The chain runs to 529 residues: Corneodesmosin (529 aa).

Positions 1 to 32 are cleaved as a signal peptide; that stretch reads MGSSRAPWMGRVGGHGMMALLLAGLLLPGTLA. 2 disordered regions span residues 38-248 and 383-492; these read FSDP…SVSG and GSTG…SSAG. Low complexity-rich tracts occupy residues 58 to 83, 90 to 100, 111 to 175, 189 to 231, 392 to 408, and 426 to 441; these read GKGD…SARS, GSSSGSSIAQG, GYSQ…NGSA, PSQP…SGGP, SPSS…SSSS, and PGTG…QSSG. N172 is a glycosylation site (N-linked (GlcNAc...) asparagine). The segment covering 449–467 has biased composition (polar residues); sequence GSKSSSSGHPCMSVSSLTL.

It is found in the secreted. Functionally, important for the epidermal barrier integrity. The protein is Corneodesmosin (CDSN) of Pan troglodytes (Chimpanzee).